A 40-amino-acid chain; its full sequence is Large ribosomal subunit protein bL36B (40 aa).

Belongs to the bacterial ribosomal protein bL36 family.

The protein is Large ribosomal subunit protein bL36B of Kocuria rhizophila (strain ATCC 9341 / DSM 348 / NBRC 103217 / DC2201).